Consider the following 440-residue polypeptide: Ribosomal protein uS12 methylthiotransferase RimO (440 aa).

The MTTase N-terminal domain maps to 5-115; that stretch reads PTVGFVSLGC…VVNAVHEVVP (111 aa). Residues C14, C50, C79, C148, C152, and C155 each coordinate [4Fe-4S] cluster. The 239-residue stretch at 134 to 372 folds into the Radical SAM core domain; it reads LTPRHYAYLK…MAHQQAISAA (239 aa). Positions 375–440 constitute a TRAM domain; the sequence is QLKVGKELDV…DEYDLWAEVI (66 aa).

This sequence belongs to the methylthiotransferase family. RimO subfamily. Requires [4Fe-4S] cluster as cofactor.

The protein resides in the cytoplasm. The enzyme catalyses L-aspartate(89)-[ribosomal protein uS12]-hydrogen + (sulfur carrier)-SH + AH2 + 2 S-adenosyl-L-methionine = 3-methylsulfanyl-L-aspartate(89)-[ribosomal protein uS12]-hydrogen + (sulfur carrier)-H + 5'-deoxyadenosine + L-methionine + A + S-adenosyl-L-homocysteine + 2 H(+). In terms of biological role, catalyzes the methylthiolation of an aspartic acid residue of ribosomal protein uS12. This Stutzerimonas stutzeri (strain A1501) (Pseudomonas stutzeri) protein is Ribosomal protein uS12 methylthiotransferase RimO.